A 141-amino-acid polypeptide reads, in one-letter code: Pheromone-binding protein-related protein 6 (141 aa).

An N-terminal signal peptide occupies residues 1–16 (MVKYPLILLLIGCAAA). Cystine bridges form between Cys-41-Cys-72, Cys-68-Cys-120, and Cys-111-Cys-129.

The protein belongs to the PBP/GOBP family. Antenna. Mostly expressed in two types of sensory hairs, sensilla trichodea and small sensilla basiconica, in the ventro-lateral region of the third antennal segment (at protein level).

Its subcellular location is the secreted. The sequence is that of Pheromone-binding protein-related protein 6 (Obp83b) from Drosophila melanogaster (Fruit fly).